A 64-amino-acid chain; its full sequence is Large ribosomal subunit protein uL29 (64 aa).

It belongs to the universal ribosomal protein uL29 family.

This chain is Large ribosomal subunit protein uL29, found in Coprothermobacter proteolyticus (strain ATCC 35245 / DSM 5265 / OCM 4 / BT).